The following is a 525-amino-acid chain: Probable protein kinase UbiB (525 aa).

The region spanning 119-501 (RFDHHPVASA…QRRTNRLLSA (383 aa)) is the Protein kinase domain. ATP contacts are provided by residues 125–133 (VASASIAQV) and K151. Residue D286 is the Proton acceptor of the active site. Residues 502 to 522 (ALLFIGGFAVGIIATHVLAWL) traverse the membrane as a helical segment.

It belongs to the ABC1 family. UbiB subfamily.

Its subcellular location is the cell inner membrane. The protein operates within cofactor biosynthesis; ubiquinone biosynthesis [regulation]. In terms of biological role, is probably a protein kinase regulator of UbiI activity which is involved in aerobic coenzyme Q (ubiquinone) biosynthesis. In Ralstonia nicotianae (strain ATCC BAA-1114 / GMI1000) (Ralstonia solanacearum), this protein is Probable protein kinase UbiB.